We begin with the raw amino-acid sequence, 205 residues long: Holliday junction branch migration complex subunit RuvA (205 aa).

A domain I region spans residues 1–64 (MIGRLRGLLV…EDAQLLYGFI (64 aa)). Residues 65 to 143 (TKQERALFRL…SLMEASHGNE (79 aa)) form a domain II region. The interval 144–156 (REFVLQSNYTPAP) is flexible linker. The tract at residues 157-205 (VVNTAEEDAISALLALGYKPAQASKAVSSVFEEGMDSETLIKASLKSML) is domain III.

Belongs to the RuvA family. In terms of assembly, homotetramer. Forms an RuvA(8)-RuvB(12)-Holliday junction (HJ) complex. HJ DNA is sandwiched between 2 RuvA tetramers; dsDNA enters through RuvA and exits via RuvB. An RuvB hexamer assembles on each DNA strand where it exits the tetramer. Each RuvB hexamer is contacted by two RuvA subunits (via domain III) on 2 adjacent RuvB subunits; this complex drives branch migration. In the full resolvosome a probable DNA-RuvA(4)-RuvB(12)-RuvC(2) complex forms which resolves the HJ.

The protein localises to the cytoplasm. The RuvA-RuvB-RuvC complex processes Holliday junction (HJ) DNA during genetic recombination and DNA repair, while the RuvA-RuvB complex plays an important role in the rescue of blocked DNA replication forks via replication fork reversal (RFR). RuvA specifically binds to HJ cruciform DNA, conferring on it an open structure. The RuvB hexamer acts as an ATP-dependent pump, pulling dsDNA into and through the RuvAB complex. HJ branch migration allows RuvC to scan DNA until it finds its consensus sequence, where it cleaves and resolves the cruciform DNA. The polypeptide is Holliday junction branch migration complex subunit RuvA (Shewanella loihica (strain ATCC BAA-1088 / PV-4)).